Consider the following 275-residue polypeptide: 4-diphosphocytidyl-2-C-methyl-D-erythritol kinase (275 aa).

Lys-15 is an active-site residue. 97–107 (PMGSGLGGGSS) is a binding site for ATP. Residue Asp-137 is part of the active site.

This sequence belongs to the GHMP kinase family. IspE subfamily.

The catalysed reaction is 4-CDP-2-C-methyl-D-erythritol + ATP = 4-CDP-2-C-methyl-D-erythritol 2-phosphate + ADP + H(+). It participates in isoprenoid biosynthesis; isopentenyl diphosphate biosynthesis via DXP pathway; isopentenyl diphosphate from 1-deoxy-D-xylulose 5-phosphate: step 3/6. In terms of biological role, catalyzes the phosphorylation of the position 2 hydroxy group of 4-diphosphocytidyl-2C-methyl-D-erythritol. This is 4-diphosphocytidyl-2-C-methyl-D-erythritol kinase from Pseudothermotoga lettingae (strain ATCC BAA-301 / DSM 14385 / NBRC 107922 / TMO) (Thermotoga lettingae).